The following is a 298-amino-acid chain: Protein FAM221A (298 aa).

Polar residues predominate over residues 241 to 257 (SSPETLTDVGTSSQVSS). Residues 241–263 (SSPETLTDVGTSSQVSSLRRPEE) are disordered.

It belongs to the FAM221 family.

This is Protein FAM221A (FAM221A) from Homo sapiens (Human).